Here is an 889-residue protein sequence, read N- to C-terminus: Disease resistance protein UNI (889 aa).

Residues Asn-19–Arg-64 are a coiled coil. The tract at residues Gly-131 to Pro-152 is disordered. The NB-ARC domain occupies Ser-137 to Val-440. Gly-179 to Thr-186 contacts ATP. 9 LRR repeats span residues Trp-510–Cys-532, Ser-533–Tyr-555, Gln-557–Leu-580, Val-581–Leu-603, Lys-604–Arg-625, Leu-626–Leu-652, Gln-653–Leu-676, Met-698–Thr-721, and Cys-825–Met-848.

This sequence belongs to the disease resistance NB-LRR family. As to quaternary structure, interacts with RPT2A.

Functionally, involved in disease resistance via the salicylic acid (SA) signaling pathway. Involved in shoot architecture development via the cytokinin signaling pathway. This chain is Disease resistance protein UNI, found in Arabidopsis thaliana (Mouse-ear cress).